We begin with the raw amino-acid sequence, 365 residues long: Probable dual-specificity RNA methyltransferase RlmN (365 aa).

Residue Glu-108 is the Proton acceptor of the active site. Positions 114-352 constitute a Radical SAM core domain; that stretch reads YPDRNTVCIS…SCTVRDTRGR (239 aa). The cysteines at positions 121 and 358 are disulfide-linked. [4Fe-4S] cluster-binding residues include Cys-128, Cys-132, and Cys-135. S-adenosyl-L-methionine contacts are provided by residues 179-180, Ser-213, 236-238, and Asn-315; these read GE and SLH. Catalysis depends on Cys-358, which acts as the S-methylcysteine intermediate.

It belongs to the radical SAM superfamily. RlmN family. The cofactor is [4Fe-4S] cluster.

The protein resides in the cytoplasm. The catalysed reaction is adenosine(2503) in 23S rRNA + 2 reduced [2Fe-2S]-[ferredoxin] + 2 S-adenosyl-L-methionine = 2-methyladenosine(2503) in 23S rRNA + 5'-deoxyadenosine + L-methionine + 2 oxidized [2Fe-2S]-[ferredoxin] + S-adenosyl-L-homocysteine. The enzyme catalyses adenosine(37) in tRNA + 2 reduced [2Fe-2S]-[ferredoxin] + 2 S-adenosyl-L-methionine = 2-methyladenosine(37) in tRNA + 5'-deoxyadenosine + L-methionine + 2 oxidized [2Fe-2S]-[ferredoxin] + S-adenosyl-L-homocysteine. Specifically methylates position 2 of adenine 2503 in 23S rRNA and position 2 of adenine 37 in tRNAs. The chain is Probable dual-specificity RNA methyltransferase RlmN from Mycolicibacterium vanbaalenii (strain DSM 7251 / JCM 13017 / BCRC 16820 / KCTC 9966 / NRRL B-24157 / PYR-1) (Mycobacterium vanbaalenii).